Here is a 251-residue protein sequence, read N- to C-terminus: Cell division protein ZapD (251 aa).

This sequence belongs to the ZapD family. In terms of assembly, interacts with FtsZ.

It localises to the cytoplasm. Cell division factor that enhances FtsZ-ring assembly. Directly interacts with FtsZ and promotes bundling of FtsZ protofilaments, with a reduction in FtsZ GTPase activity. In Burkholderia thailandensis (strain ATCC 700388 / DSM 13276 / CCUG 48851 / CIP 106301 / E264), this protein is Cell division protein ZapD.